The primary structure comprises 249 residues: General transcription factor IIF subunit 2 (249 aa).

The residue at position 2 (alanine 2) is an N-acetylalanine. N6-acetyllysine occurs at positions 22, 33, and 137. Serine 142 carries the post-translational modification Phosphoserine. Residues glycine 227 and histidine 229 each contribute to the DNA site. Serine 248 carries the phosphoserine modification.

It belongs to the TFIIF beta subunit family. In terms of assembly, heterodimer of an alpha and a beta subunit. Interacts with HTATSF1 and GPBP1. Interacts with URI1. Interacts with GTF2B (via N-terminus); this interaction is inhibited in presence of GTF2F1. Part of TBP-based Pol II pre-initiation complex (PIC), in which Pol II core assembles with general transcription factors and other specific initiation factors including GTF2E1, GTF2E2, GTF2F1, GTF2F2, TCEA1, ERCC2, ERCC3, GTF2H2, GTF2H3, GTF2H4, GTF2H5, GTF2A1, GTF2A2, GTF2B and TBP; this large multi-subunit PIC complex mediates DNA unwinding and targets Pol II core to the transcription start site where the first phosphodiester bond forms.

It is found in the nucleus. Its function is as follows. TFIIF is a general transcription initiation factor that binds to RNA polymerase II and helps to recruit it to the initiation complex in collaboration with TFIIB. It promotes transcription elongation. The polypeptide is General transcription factor IIF subunit 2 (Gtf2f2) (Rattus norvegicus (Rat)).